A 184-amino-acid polypeptide reads, in one-letter code: Chaperone protein dnaJ 72 (184 aa).

A J domain is found at 3–73 (DHYQVLGVTR…LKRASYNAGS (71 aa)). The chain crosses the membrane as a helical span at residues 133-150 (FLLNLALAGGLYFAFTAI).

This sequence belongs to the DnaJ family. C/III subfamily.

The protein resides in the membrane. Plays a continuous role in plant development probably in the structural organization of compartments. The chain is Chaperone protein dnaJ 72 (ATJ72) from Arabidopsis thaliana (Mouse-ear cress).